Reading from the N-terminus, the 945-residue chain is Translation initiation factor IF-2 (945 aa).

Disordered stretches follow at residues 52-80 and 96-357; these read RSHG…DSSG and MKRD…FQAP. A compositionally biased stretch (acidic residues) spans 153 to 175; the sequence is PEPEPIVEPEPEPEPEPEPEPQP. 2 stretches are compositionally biased toward basic and acidic residues: residues 215–283 and 294–310; these read DEER…KEAA and AKTE…RTAR. Positions 445-614 constitute a tr-type G domain; it reads PRAPVVTVMG…LLQAEVLELT (170 aa). The G1 stretch occupies residues 454–461; that stretch reads GHVDHGKT. 454-461 serves as a coordination point for GTP; the sequence is GHVDHGKT. Residues 479–483 are G2; it reads GITQH. Residues 500-503 form a G3 region; it reads DTPG. GTP-binding positions include 500-504 and 554-557; these read DTPGH and NKID. The G4 stretch occupies residues 554–557; the sequence is NKID. The tract at residues 590-592 is G5; it reads SAK.

Belongs to the TRAFAC class translation factor GTPase superfamily. Classic translation factor GTPase family. IF-2 subfamily.

Its subcellular location is the cytoplasm. One of the essential components for the initiation of protein synthesis. Protects formylmethionyl-tRNA from spontaneous hydrolysis and promotes its binding to the 30S ribosomal subunits. Also involved in the hydrolysis of GTP during the formation of the 70S ribosomal complex. The sequence is that of Translation initiation factor IF-2 from Aromatoleum aromaticum (strain DSM 19018 / LMG 30748 / EbN1) (Azoarcus sp. (strain EbN1)).